Here is a 279-residue protein sequence, read N- to C-terminus: NAD kinase (279 aa).

The active-site Proton acceptor is the Asp61. Residues 61–62 (DG), 138–139 (ND), Lys149, Lys166, Asp168, and 179–184 (TGYSFS) each bind NAD(+).

This sequence belongs to the NAD kinase family. A divalent metal cation serves as cofactor.

It localises to the cytoplasm. The enzyme catalyses NAD(+) + ATP = ADP + NADP(+) + H(+). Its function is as follows. Involved in the regulation of the intracellular balance of NAD and NADP, and is a key enzyme in the biosynthesis of NADP. Catalyzes specifically the phosphorylation on 2'-hydroxyl of the adenosine moiety of NAD to yield NADP. The protein is NAD kinase of Borrelia garinii subsp. bavariensis (strain ATCC BAA-2496 / DSM 23469 / PBi) (Borreliella bavariensis).